The chain runs to 124 residues: MPTINQLVRRPRRPRESANKAPALQHNPQKRAVCVKVYTTTPKKPNSALRKVARVRIAGYGSEVIAYIPGEGHNLQEHSVVLIRGGRVKDLPGVRYHIVRGALDAKGVQGRKKARSKYGVKRGV.

The tract at residues 1–29 is disordered; that stretch reads MPTINQLVRRPRRPRESANKAPALQHNPQ. Position 90 is a 3-methylthioaspartic acid (aspartate 90).

This sequence belongs to the universal ribosomal protein uS12 family. Part of the 30S ribosomal subunit. Contacts proteins S8 and S17. May interact with IF1 in the 30S initiation complex.

In terms of biological role, with S4 and S5 plays an important role in translational accuracy. Interacts with and stabilizes bases of the 16S rRNA that are involved in tRNA selection in the A site and with the mRNA backbone. Located at the interface of the 30S and 50S subunits, it traverses the body of the 30S subunit contacting proteins on the other side and probably holding the rRNA structure together. The combined cluster of proteins S8, S12 and S17 appears to hold together the shoulder and platform of the 30S subunit. This is Small ribosomal subunit protein uS12 from Anaplasma marginale (strain Florida).